We begin with the raw amino-acid sequence, 33 residues long: Photosystem II reaction center protein Psb30 (33 aa).

Residues 5-25 traverse the membrane as a helical segment; that stretch reads VIAQLTVLALIVISGPLVIAL.

Belongs to the Psb30/Ycf12 family. In terms of assembly, PSII is composed of 1 copy each of membrane proteins PsbA, PsbB, PsbC, PsbD, PsbE, PsbF, PsbH, PsbI, PsbJ, PsbK, PsbL, PsbM, PsbT, PsbX, PsbY, PsbZ, Psb30/Ycf12, peripheral proteins of the oxygen-evolving complex and a large number of cofactors. It forms dimeric complexes.

Its subcellular location is the plastid. It localises to the chloroplast thylakoid membrane. A core subunit of photosystem II (PSII), probably helps stabilize the reaction center. The sequence is that of Photosystem II reaction center protein Psb30 from Huperzia lucidula (Shining clubmoss).